Reading from the N-terminus, the 187-residue chain is NADH-quinone oxidoreductase subunit C 2 (187 aa).

The tract at residues 153 to 187 (YKDKLNPFGAEGPPPTQPDLATRDIPQGRPSTPES) is disordered.

The protein belongs to the complex I 30 kDa subunit family. In terms of assembly, NDH-1 is composed of 14 different subunits. Subunits NuoB, C, D, E, F, and G constitute the peripheral sector of the complex.

Its subcellular location is the cell inner membrane. It carries out the reaction a quinone + NADH + 5 H(+)(in) = a quinol + NAD(+) + 4 H(+)(out). Functionally, NDH-1 shuttles electrons from NADH, via FMN and iron-sulfur (Fe-S) centers, to quinones in the respiratory chain. The immediate electron acceptor for the enzyme in this species is believed to be ubiquinone. Couples the redox reaction to proton translocation (for every two electrons transferred, four hydrogen ions are translocated across the cytoplasmic membrane), and thus conserves the redox energy in a proton gradient. This chain is NADH-quinone oxidoreductase subunit C 2, found in Rhizobium etli (strain CIAT 652).